A 205-amino-acid polypeptide reads, in one-letter code: Peptidyl-tRNA hydrolase (205 aa).

Residue Tyr17 participates in tRNA binding. His22 (proton acceptor) is an active-site residue. 2 residues coordinate tRNA: Tyr73 and Asn75.

The protein belongs to the PTH family. As to quaternary structure, monomer.

The protein localises to the cytoplasm. It catalyses the reaction an N-acyl-L-alpha-aminoacyl-tRNA + H2O = an N-acyl-L-amino acid + a tRNA + H(+). Its function is as follows. Hydrolyzes ribosome-free peptidyl-tRNAs (with 1 or more amino acids incorporated), which drop off the ribosome during protein synthesis, or as a result of ribosome stalling. Catalyzes the release of premature peptidyl moieties from peptidyl-tRNA molecules trapped in stalled 50S ribosomal subunits, and thus maintains levels of free tRNAs and 50S ribosomes. In Maridesulfovibrio salexigens (strain ATCC 14822 / DSM 2638 / NCIMB 8403 / VKM B-1763) (Desulfovibrio salexigens), this protein is Peptidyl-tRNA hydrolase.